We begin with the raw amino-acid sequence, 367 residues long: Choline-phosphate cytidylyltransferase A (367 aa).

M1 carries the post-translational modification N-acetylmethionine. Residues 1–33 (MDAQCSAKVNARKRRKEAPGPNGATEEDGVPSK) form a disordered region. K8 bears the N6-acetyllysine mark. Positions 84, 85, 92, and 122 each coordinate CTP. Residues K122 and W151 each contribute to the phosphocholine site. Residues H168, D169, Y173, Q195, R196, T197, and I200 each coordinate CTP. 2 amphipathic regions span residues 228-287 (KELN…EFIG) and 298-315 (ALKH…QAIS). The residue at position 233 (S233) is a Phosphoserine. The interval 272-293 (IDLIQKWEEKSREFIGSFLEMF) is autoinhibitory (AI). The disordered stretch occupies residues 313 to 367 (AISPKQSPSSSPTRERSPSPSFRWPFSGKTSPPCSPANLSRHKAAAYDISEDEED). 5 positions are modified to phosphoserine: S315, S319, S321, S322, and S323. Residues 319–324 (SPSSSP) form repeat 1. A compositionally biased stretch (low complexity) spans 319-339 (SPSSSPTRERSPSPSFRWPFS). A Phosphothreonine modification is found at T325. Phosphoserine is present on residues S329, S331, and S333. Residues 329-333 (SPSPS) form a 2; approximate repeat. T342 carries the post-translational modification Phosphothreonine. Phosphoserine is present on residues S343, S347, S352, and S362. Repeat 3 spans residues 343–348 (SPPCSP).

Belongs to the cytidylyltransferase family. In terms of assembly, homodimer. The serine residues of the C-terminus are phosphorylated. The inactive soluble form is stabilized by phosphorylation, the active membrane bound form is promoted by anionic lipids or diacylglycerol, and is stabilized by dephosphorylation. Post-translationally, monoubiquitinated by the SCF(FBXL2) complex, leading to proteasomal degradation. In terms of tissue distribution, brain, placenta, liver, fetal and adult lung.

The protein resides in the cytoplasm. It localises to the cytosol. Its subcellular location is the membrane. It is found in the endoplasmic reticulum membrane. The protein localises to the nucleus. It carries out the reaction phosphocholine + CTP + H(+) = CDP-choline + diphosphate. It functions in the pathway phospholipid metabolism; phosphatidylcholine biosynthesis; phosphatidylcholine from phosphocholine: step 1/2. Its activity is regulated as follows. Interconverts between an inactive cytosolic form and an active membrane-bound form. Activation involves disruption of an inhibitory interaction between helices at the base of the active site and the autoinhibitory (AI) region. Activated by anionic lipid vesicles and by oleic acid or diacylglycerol-containing phosphatidylcholine vesicles. Functionally, catalyzes the key rate-limiting step in the CDP-choline pathway for phosphatidylcholine biosynthesis. This chain is Choline-phosphate cytidylyltransferase A (PCYT1A), found in Homo sapiens (Human).